We begin with the raw amino-acid sequence, 372 residues long: 4-hydroxy-3-methylbut-2-en-1-yl diphosphate synthase (flavodoxin) (372 aa).

[4Fe-4S] cluster-binding residues include Cys270, Cys273, Cys305, and Glu312.

The protein belongs to the IspG family. It depends on [4Fe-4S] cluster as a cofactor.

It carries out the reaction (2E)-4-hydroxy-3-methylbut-2-enyl diphosphate + oxidized [flavodoxin] + H2O + 2 H(+) = 2-C-methyl-D-erythritol 2,4-cyclic diphosphate + reduced [flavodoxin]. Its pathway is isoprenoid biosynthesis; isopentenyl diphosphate biosynthesis via DXP pathway; isopentenyl diphosphate from 1-deoxy-D-xylulose 5-phosphate: step 5/6. Converts 2C-methyl-D-erythritol 2,4-cyclodiphosphate (ME-2,4cPP) into 1-hydroxy-2-methyl-2-(E)-butenyl 4-diphosphate. The polypeptide is 4-hydroxy-3-methylbut-2-en-1-yl diphosphate synthase (flavodoxin) (Aliivibrio fischeri (strain ATCC 700601 / ES114) (Vibrio fischeri)).